Consider the following 303-residue polypeptide: 2-dehydropantoate 2-reductase (303 aa).

NADP(+) is bound by residues 7 to 12, lysine 78, asparagine 103, and alanine 129; that span reads GPGSLG. The active-site Proton donor is the lysine 185. Substrate contacts are provided by residues lysine 185, asparagine 189, asparagine 193, asparagine 203, and 252–255; that span reads NESS. Glutamate 267 is a binding site for NADP(+).

This sequence belongs to the ketopantoate reductase family.

The protein localises to the cytoplasm. It catalyses the reaction (R)-pantoate + NAD(+) = 2-dehydropantoate + NADH + H(+). The enzyme catalyses (R)-pantoate + NADP(+) = 2-dehydropantoate + NADPH + H(+). The protein operates within cofactor biosynthesis; coenzyme A biosynthesis. Functionally, catalyzes the NAD(P)H-dependent reduction of ketopantoate into pantoic acid. This Halobacterium salinarum (strain ATCC 700922 / JCM 11081 / NRC-1) (Halobacterium halobium) protein is 2-dehydropantoate 2-reductase.